Here is a 425-residue protein sequence, read N- to C-terminus: GTPase Obg (425 aa).

One can recognise an Obg domain in the interval Met1–Val158. One can recognise an OBG-type G domain in the interval Ala159 to Arg330. GTP is bound by residues Gly165–Ser172, Phe190–Thr194, Asp212–Gly215, Asn282–Asp285, and Ser311–Ala313. 2 residues coordinate Mg(2+): Ser172 and Thr192. The region spanning Val345 to Ala422 is the OCT domain.

The protein belongs to the TRAFAC class OBG-HflX-like GTPase superfamily. OBG GTPase family. As to quaternary structure, monomer. Requires Mg(2+) as cofactor.

The protein resides in the cytoplasm. In terms of biological role, an essential GTPase which binds GTP, GDP and possibly (p)ppGpp with moderate affinity, with high nucleotide exchange rates and a fairly low GTP hydrolysis rate. Plays a role in control of the cell cycle, stress response, ribosome biogenesis and in those bacteria that undergo differentiation, in morphogenesis control. The chain is GTPase Obg from Symbiobacterium thermophilum (strain DSM 24528 / JCM 14929 / IAM 14863 / T).